Consider the following 106-residue polypeptide: MGKTNDWLDFDQLVEDDLRDALKPPSMYKVILVNDDYTPMEFVIDVLQKFFSYDVERATQLMLAVHYQGKAICGVFTAEVAETKVEMVNQYARENEHPLLCTLEKA.

The protein belongs to the ClpS family. In terms of assembly, binds to the N-terminal domain of the chaperone ClpA.

Involved in the modulation of the specificity of the ClpAP-mediated ATP-dependent protein degradation. The protein is ATP-dependent Clp protease adapter protein ClpS of Salmonella arizonae (strain ATCC BAA-731 / CDC346-86 / RSK2980).